Here is a 172-residue protein sequence, read N- to C-terminus: Protein-export protein SecB (172 aa).

Belongs to the SecB family. Homotetramer, a dimer of dimers. One homotetramer interacts with 1 SecA dimer.

Its subcellular location is the cytoplasm. One of the proteins required for the normal export of preproteins out of the cell cytoplasm. It is a molecular chaperone that binds to a subset of precursor proteins, maintaining them in a translocation-competent state. It also specifically binds to its receptor SecA. The sequence is that of Protein-export protein SecB from Stenotrophomonas maltophilia (strain K279a).